A 114-amino-acid polypeptide reads, in one-letter code: MGNYISFKKEFGLILVGAIIFTASYLWKDLLLEIEEKYFPKGYGLMWRSIYTILVTVILVLVAIHLKNQFGLVNKDSKDPKDKSIEFDDSPIRDGSSGTPDNSNEPTDLSVETS.

A lipid anchor (N-myristoyl glycine; by host) is attached at G2. 2 helical membrane passes run F11–L31 and G44–I64. Residues V73–S114 are disordered. Residues K75–I92 show a composition bias toward basic and acidic residues. A compositionally biased stretch (polar residues) spans S96 to S114.

The protein localises to the membrane. This is an uncharacterized protein from Acanthamoeba polyphaga (Amoeba).